A 353-amino-acid polypeptide reads, in one-letter code: Abasic site processing protein HMCES (353 aa).

Cys2 acts as the Nucleophile in catalysis. A Thiazolidine linkage to a ring-opened DNA abasic site modification is found at Cys2. Residue Glu127 is part of the active site. Glycyl lysine isopeptide (Lys-Gly) (interchain with G-Cter in SUMO2) cross-links involve residues Lys148 and Lys151. Phosphoserine is present on Ser160. Glycyl lysine isopeptide (Lys-Gly) (interchain with G-Cter in SUMO2) cross-links involve residues Lys274 and Lys275. Residues 292-353 (TKSPKKEVPD…DEPMAKKPNS (62 aa)) are disordered. A Phosphoserine modification is found at Ser294. Residues 295–307 (PKKEVPDSPKKDA) show a composition bias toward basic and acidic residues. Residue Lys305 forms a Glycyl lysine isopeptide (Lys-Gly) (interchain with G-Cter in SUMO2) linkage. Phosphoserine is present on Ser321. The PIP-box signature appears at 332–338 (SFLDRWL). Positions 336–353 (RWLKQEKEDEPMAKKPNS) are enriched in basic and acidic residues. Residues Lys339 and Lys342 each participate in a glycyl lysine isopeptide (Lys-Gly) (interchain with G-Cter in SUMO2) cross-link.

Belongs to the SOS response-associated peptidase family. Interacts (via PIP-box motif) with PCNA. As to expression, expressed in embryonic stem cells.

Its subcellular location is the chromosome. Its activity is regulated as follows. Formation and reversal of DNA-protein cross-link depends on DNA context. Catalyzes formation of the thiazolidine linkage in presence of abasic sites in single-stranded DNA. Mediates the reversal of the thiazolidine cross-link in presence of double stranded DNA. Sensor of abasic sites in single-stranded DNA (ssDNA) required to preserve genome integrity by promoting error-free repair of abasic sites. Acts as an enzyme that recognizes and binds abasic sites in ssDNA at replication forks and chemically modifies the lesion by forming a covalent cross-link with DNA: forms a stable thiazolidine linkage between a ring-opened abasic site and the alpha-amino and sulfhydryl substituents of its N-terminal catalytic cysteine residue. Promotes error-free repair by protecting abasic sites from translesion synthesis (TLS) polymerases and endonucleases that are error-prone and would generate mutations and double-strand breaks. The HMCES DNA-protein cross-link is then either reversed or degraded. HMCES is able to catalyze the reversal of its thiazolidine cross-link and cycle between a cross-link and a non-cross-linked state depending on DNA context: mediates self-reversal of the thiazolidine cross-link in double stranded DNA, allowing APEX1 to initiate downstream repair of abasic sites. The HMCES DNA-protein cross-link can also be degraded by the SPRTN metalloprotease following unfolding by the BRIP1/FANCJ helicase. Has preference for ssDNA, but can also accommodate double-stranded DNA with 3' or 5' overhang (dsDNA), and dsDNA-ssDNA 3' junction. Plays a protective role during somatic hypermutation of immunoglobulin genes in B-cells: acts via its ability to form covalent cross-links with abasic sites, thereby limiting the accumulation of deletions in somatic hypermutation target regions. Also involved in class switch recombination (CSR) in B-cells independently of the formation of a DNA-protein cross-link: acts by binding and protecting ssDNA overhangs to promote DNA double-strand break repair through the microhomology-mediated alternative-end-joining (Alt-EJ) pathway. Acts as a protease: mediates autocatalytic processing of its N-terminal methionine in order to expose the catalytic cysteine. This Mus musculus (Mouse) protein is Abasic site processing protein HMCES.